Consider the following 341-residue polypeptide: Anthranilate phosphoribosyltransferase (341 aa).

5-phospho-alpha-D-ribose 1-diphosphate-binding positions include glycine 79, 82–83 (GD), threonine 87, 89–92 (NIST), 107–115 (KHGNRAVSS), and serine 119. Glycine 79 serves as a coordination point for anthranilate. Serine 91 is a Mg(2+) binding site. Asparagine 110 contacts anthranilate. Arginine 165 lines the anthranilate pocket. Positions 224 and 225 each coordinate Mg(2+).

This sequence belongs to the anthranilate phosphoribosyltransferase family. In terms of assembly, homodimer. Mg(2+) is required as a cofactor.

It catalyses the reaction N-(5-phospho-beta-D-ribosyl)anthranilate + diphosphate = 5-phospho-alpha-D-ribose 1-diphosphate + anthranilate. It functions in the pathway amino-acid biosynthesis; L-tryptophan biosynthesis; L-tryptophan from chorismate: step 2/5. Functionally, catalyzes the transfer of the phosphoribosyl group of 5-phosphorylribose-1-pyrophosphate (PRPP) to anthranilate to yield N-(5'-phosphoribosyl)-anthranilate (PRA). This Bacillus cereus (strain ZK / E33L) protein is Anthranilate phosphoribosyltransferase.